The sequence spans 333 residues: tRNA pseudouridine synthase B (333 aa).

Aspartate 46 serves as the catalytic Nucleophile.

This sequence belongs to the pseudouridine synthase TruB family. Type 1 subfamily.

It catalyses the reaction uridine(55) in tRNA = pseudouridine(55) in tRNA. Responsible for synthesis of pseudouridine from uracil-55 in the psi GC loop of transfer RNAs. In Gluconobacter oxydans (strain 621H) (Gluconobacter suboxydans), this protein is tRNA pseudouridine synthase B.